A 442-amino-acid chain; its full sequence is tRNA modification GTPase MnmE (442 aa).

The (6S)-5-formyl-5,6,7,8-tetrahydrofolate site is built by Arg22, Glu79, and Lys119. The TrmE-type G domain maps to 216–366 (GIKTCLVGAP…LLEKIKSIFA (151 aa)). Asn226 is a K(+) binding site. GTP contacts are provided by residues 226 to 231 (NSGKSS), 245 to 251 (SEIPGTT), and 270 to 273 (DTAG). Ser230 lines the Mg(2+) pocket. Residues Ser245, Ile247, and Thr250 each coordinate K(+). A Mg(2+)-binding site is contributed by Thr251. (6S)-5-formyl-5,6,7,8-tetrahydrofolate is bound at residue Lys442.

This sequence belongs to the TRAFAC class TrmE-Era-EngA-EngB-Septin-like GTPase superfamily. TrmE GTPase family. Homodimer. Heterotetramer of two MnmE and two MnmG subunits. The cofactor is K(+).

Its subcellular location is the cytoplasm. Exhibits a very high intrinsic GTPase hydrolysis rate. Involved in the addition of a carboxymethylaminomethyl (cmnm) group at the wobble position (U34) of certain tRNAs, forming tRNA-cmnm(5)s(2)U34. The chain is tRNA modification GTPase MnmE from Mesomycoplasma hyopneumoniae (strain J / ATCC 25934 / NCTC 10110) (Mycoplasma hyopneumoniae).